Here is a 553-residue protein sequence, read N- to C-terminus: Neutral amino acid transporter B(0) (553 aa).

Methionine 1 carries the post-translational modification N-acetylmethionine. Over 1-50 (MAVDPPKADPKGVAVDSSRRCPALGSREDQSAKAGGCCGSRDRVRRCIRA) the chain is Cytoplasmic. The chain crosses the membrane as a helical span at residues 51–80 (NLLVLLTVAAVVAGVGLGLGVSAAGGADAL). Topologically, residues 81-93 (GPARLTRFAFPGE) are extracellular. A helical membrane pass occupies residues 94-115 (LLLRLLKMIILPLVVCSLIGGA). Topologically, residues 116 to 129 (ASLDPSALGRVGAW) are cytoplasmic. The chain crosses the membrane as a helical span at residues 130–152 (ALLFFLVTTLLASALGVGLALAL). The Extracellular segment spans residues 153–236 (KPGAAVTAIT…INSTMVQLLC (84 aa)). Residues asparagine 165 and asparagine 228 are each glycosylated (N-linked (GlcNAc...) asparagine). A helical membrane pass occupies residues 237–260 (EVEGMNILGLVVFAIVFGVALRKL). Over 261–269 (GPEGELLIR) the chain is Cytoplasmic. A helical membrane pass occupies residues 270–297 (FFNSFNDATMVLVSWIMWYAPVGILFLV). Residues 298–318 (ASKIVEMKDVRQLFISLGKYI) lie on the Extracellular side of the membrane. The helical transmembrane segment at 319-340 (LCCLLGHAIHGLLVLPLIYFLF) threads the bilayer. Over 341–345 (TRKNP) the chain is Cytoplasmic. Positions 346 to 376 (YRFLWGIMTPLATAFGTSSSSATLPLMMKCV) form an intramembrane region, discontinuously helical. The Cytoplasmic portion of the chain corresponds to 377-385 (EEKNGVAKH). Residues 386 to 412 (ISRFILPIGATVNMDGAALFQCVAAVF) form a helical membrane-spanning segment. Na(+) contacts are provided by glycine 394, threonine 396, and asparagine 398. Residues 413–425 (IAQLNGVSLDFVK) are Extracellular-facing. The segment at residues 426–459 (IITILVTATASSVGAAGIPAGGVLTLAIILEAVS) is an intramembrane region (discontinuously helical). Over 460–472 (LPVKDISLILAVD) the chain is Extracellular. The chain crosses the membrane as a helical span at residues 473-494 (WLVDRSCTVLNVEGDAFGAGLL). The Na(+) site is built by asparagine 483 and aspartate 487. The Cytoplasmic segment spans residues 495–553 (QSYVDRTKMPSSEPELIQVKNEVSLNPLPLATEEGNPLLKQYQGPTGDSSATFEKESVM). 5 positions are modified to phosphoserine: serine 505, serine 506, serine 518, serine 543, and serine 551. The disordered stretch occupies residues 531–553 (PLLKQYQGPTGDSSATFEKESVM). A compositionally biased stretch (polar residues) spans 537–546 (QGPTGDSSAT).

It belongs to the dicarboxylate/amino acid:cation symporter (DAACS) (TC 2.A.23) family. SLC1A5 subfamily. Homotrimer. Highly expressed in adipose tissue. Detected in lung, skeletal muscle, large intestine, kidney and testis. Expressed in lung, brain, kidney and neural retina (at protein level). Expressed in Mueller cells (at protein level).

It localises to the cell membrane. It is found in the melanosome. It carries out the reaction L-glutamine(out) + L-serine(in) + Na(+)(out) = L-glutamine(in) + L-serine(out) + Na(+)(in). The enzyme catalyses L-glutamine(in) + L-serine(out) + Na(+)(out) = L-glutamine(out) + L-serine(in) + Na(+)(in). The catalysed reaction is L-threonine(in) + L-glutamine(out) + Na(+)(out) = L-threonine(out) + L-glutamine(in) + Na(+)(in). It catalyses the reaction L-threonine(out) + L-glutamine(in) + Na(+)(out) = L-threonine(in) + L-glutamine(out) + Na(+)(in). It carries out the reaction L-asparagine(in) + L-glutamine(out) + Na(+)(out) = L-asparagine(out) + L-glutamine(in) + Na(+)(in). The enzyme catalyses L-asparagine(out) + L-glutamine(in) + Na(+)(out) = L-asparagine(in) + L-glutamine(out) + Na(+)(in). The catalysed reaction is L-glutamine(in) + L-alanine(out) + Na(+)(out) = L-glutamine(out) + L-alanine(in) + Na(+)(in). It catalyses the reaction L-valine(out) + L-glutamine(in) + Na(+)(out) = L-valine(in) + L-glutamine(out) + Na(+)(in). It carries out the reaction L-glutamine(in) + L-methionine(out) + Na(+)(out) = L-glutamine(out) + L-methionine(in) + Na(+)(in). The enzyme catalyses L-glutamine(in) + L-glutamate(out) + Na(+)(out) + H(+)(out) = L-glutamine(out) + L-glutamate(in) + Na(+)(in) + H(+)(in). The catalysed reaction is D-serine(in) + L-glutamine(out) + Na(+)(out) = D-serine(out) + L-glutamine(in) + Na(+)(in). It catalyses the reaction D-serine(in) + L-alanine(out) + Na(+)(out) = D-serine(out) + L-alanine(in) + Na(+)(in). It carries out the reaction nitrate(in) = nitrate(out). The enzyme catalyses iodide(out) = iodide(in). The catalysed reaction is thiocyanate(in) = thiocyanate(out). Down-regulated at acidic pH, with the exception of L-glutamate transport which is up-regulated instead. Functionally, sodium-coupled antiporter of neutral amino acids. In a tri-substrate transport cycle, exchanges neutral amino acids between the extracellular and intracellular compartments, coupled to the inward cotransport of at least one sodium ion. The preferred substrate is the essential amino acid L-glutamine, a precursor for biosynthesis of proteins, nucleotides and amine sugars as well as an alternative fuel for mitochondrial oxidative phosphorylation. Exchanges L-glutamine with other neutral amino acids such as L-serine, L-threonine and L-asparagine in a bidirectional way. Provides L-glutamine to proliferating stem and activated cells driving the metabolic switch toward cell differentiation. The transport cycle is usually pH-independent, with the exception of L-glutamate. Transports extracellular L-glutamate coupled to the cotransport of one proton and one sodium ion in exchange for intracellular L-glutamine counter-ion. May provide for L-glutamate uptake in glial cells regulating glutamine/glutamate cycle in the nervous system. Can transport D-amino acids. Mediates D-serine release from the retinal glia potentially affecting NMDA receptor function in retinal neurons. Displays sodium- and amino acid-dependent but uncoupled channel-like anion conductance with a preference SCN(-) &gt;&gt; NO3(-) &gt; I(-) &gt; Cl(-). Through binding of the fusogenic protein syncytin-1/ERVW-1 may mediate trophoblasts syncytialization, the spontaneous fusion of their plasma membranes, an essential process in placental development. The protein is Neutral amino acid transporter B(0) (Slc1a5) of Mus musculus (Mouse).